We begin with the raw amino-acid sequence, 345 residues long: Dihydroorotate dehydrogenase (quinone) (345 aa).

FMN-binding positions include 65-69 and Thr-89; that span reads AGLDK. Residue Lys-69 coordinates substrate. A substrate-binding site is contributed by 114–118; the sequence is NRMGF. Residues Asn-142 and Asn-175 each contribute to the FMN site. Asn-175 is a substrate binding site. The active-site Nucleophile is Ser-178. Residue Asn-180 coordinates substrate. The FMN site is built by Lys-220 and Thr-248. Residue 249–250 coordinates substrate; sequence NT. FMN contacts are provided by residues Gly-271, Gly-300, and 321-322; that span reads YT.

Belongs to the dihydroorotate dehydrogenase family. Type 2 subfamily. In terms of assembly, monomer. FMN is required as a cofactor.

Its subcellular location is the cell membrane. The catalysed reaction is (S)-dihydroorotate + a quinone = orotate + a quinol. Its pathway is pyrimidine metabolism; UMP biosynthesis via de novo pathway; orotate from (S)-dihydroorotate (quinone route): step 1/1. Functionally, catalyzes the conversion of dihydroorotate to orotate with quinone as electron acceptor. This is Dihydroorotate dehydrogenase (quinone) from Burkholderia cenocepacia (strain HI2424).